Reading from the N-terminus, the 130-residue chain is Glycine cleavage system H protein (130 aa).

The Lipoyl-binding domain maps to 24 to 106; sequence SVTVGITEHA…YGDGWIMRIQ (83 aa). Lysine 65 is subject to N6-lipoyllysine.

This sequence belongs to the GcvH family. The glycine cleavage system is composed of four proteins: P, T, L and H. The cofactor is (R)-lipoate.

In terms of biological role, the glycine cleavage system catalyzes the degradation of glycine. The H protein shuttles the methylamine group of glycine from the P protein to the T protein. The polypeptide is Glycine cleavage system H protein (Halorhodospira halophila (strain DSM 244 / SL1) (Ectothiorhodospira halophila (strain DSM 244 / SL1))).